A 193-amino-acid chain; its full sequence is Immunogenic protein MPB70 (193 aa).

The N-terminal stretch at 1-30 (MKVKNTIAATSFAAAGLAALAVAVSPPAAA) is a signal peptide. The 133-residue stretch at 57-189 (QDPVAVAASN…ATVYMIDSVL (133 aa)) folds into the FAS1 domain.

As to quaternary structure, generally found as a monomer; homodimer in culture fluids.

The protein resides in the secreted. This chain is Immunogenic protein MPB70 (mpb70), found in Mycobacterium bovis (strain ATCC BAA-935 / AF2122/97).